The following is a 331-amino-acid chain: Ubiquinone biosynthesis protein UbiU (331 aa).

Positions 169, 176, 193, and 232 each coordinate [4Fe-4S] cluster.

It belongs to the peptidase U32 family. UbiU subfamily. As to quaternary structure, forms a heterodimer with UbiV. The cofactor is [4Fe-4S] cluster.

Its pathway is cofactor biosynthesis; ubiquinone biosynthesis. In terms of biological role, required for O(2)-independent ubiquinone (coenzyme Q) biosynthesis. Together with UbiV, is essential for the C6-hydroxylation reaction in the oxygen-independent ubiquinone biosynthesis pathway. The polypeptide is Ubiquinone biosynthesis protein UbiU (Escherichia coli (strain K12)).